Reading from the N-terminus, the 73-residue chain is Large ribosomal subunit protein bL31 (73 aa).

Belongs to the bacterial ribosomal protein bL31 family. Type A subfamily. Part of the 50S ribosomal subunit.

Binds the 23S rRNA. In Chelativorans sp. (strain BNC1), this protein is Large ribosomal subunit protein bL31.